A 301-amino-acid chain; its full sequence is tRNA dimethylallyltransferase (301 aa).

2–9 (GPTASGKT) is an ATP binding site. Substrate is bound at residue 4-9 (TASGKT). Interaction with substrate tRNA stretches follow at residues 27 to 30 (DSAM) and 151 to 155 (QRIQR).

It belongs to the IPP transferase family. Monomer. The cofactor is Mg(2+).

The catalysed reaction is adenosine(37) in tRNA + dimethylallyl diphosphate = N(6)-dimethylallyladenosine(37) in tRNA + diphosphate. Functionally, catalyzes the transfer of a dimethylallyl group onto the adenine at position 37 in tRNAs that read codons beginning with uridine, leading to the formation of N6-(dimethylallyl)adenosine (i(6)A). The sequence is that of tRNA dimethylallyltransferase from Coxiella burnetii (strain CbuK_Q154) (Coxiella burnetii (strain Q154)).